The chain runs to 440 residues: Ribosomal protein uS12 methylthiotransferase RimO (440 aa).

The region spanning 6 to 116 is the MTTase N-terminal domain; the sequence is PKVGFVSLGC…VVTAVHEVVP (111 aa). 6 residues coordinate [4Fe-4S] cluster: cysteine 15, cysteine 51, cysteine 80, cysteine 149, cysteine 153, and cysteine 156. Positions 135–373 constitute a Radical SAM core domain; sequence LTPRHYAYLK…MAHQQAISAA (239 aa). The region spanning 376–440 is the TRAM domain; the sequence is QLKVGKEIEV…DEYDLWAELV (65 aa).

It belongs to the methylthiotransferase family. RimO subfamily. It depends on [4Fe-4S] cluster as a cofactor.

It is found in the cytoplasm. It catalyses the reaction L-aspartate(89)-[ribosomal protein uS12]-hydrogen + (sulfur carrier)-SH + AH2 + 2 S-adenosyl-L-methionine = 3-methylsulfanyl-L-aspartate(89)-[ribosomal protein uS12]-hydrogen + (sulfur carrier)-H + 5'-deoxyadenosine + L-methionine + A + S-adenosyl-L-homocysteine + 2 H(+). Catalyzes the methylthiolation of an aspartic acid residue of ribosomal protein uS12. In Pseudomonas aeruginosa (strain ATCC 15692 / DSM 22644 / CIP 104116 / JCM 14847 / LMG 12228 / 1C / PRS 101 / PAO1), this protein is Ribosomal protein uS12 methylthiotransferase RimO.